Consider the following 153-residue polypeptide: Ribosome maturation factor RimP (153 aa).

This sequence belongs to the RimP family.

The protein localises to the cytoplasm. Required for maturation of 30S ribosomal subunits. The sequence is that of Ribosome maturation factor RimP from Clostridium botulinum (strain Langeland / NCTC 10281 / Type F).